The primary structure comprises 325 residues: MSDLQAAEGPGSWSPTARPGSAGGVGDCQGVEGSQAAASENEDLENKDTSLLASATDPEPCSSPHRPQMVSPVSKDATEDLRKATGPLEAQALVKQDLLPADQAQVLNEMAKYQVPQRSGDIVMIQSEHTGAIDVLSADLESADLLGDHRKVSPPLMAPPCIWTFAKVKEFKSKLGKEKNSRLVVKRGEVVTIRVPTHPEGKRVCWEFATDDYDIGFGVYFDWTPVTSTDITVQVSDSSDDEDEEEEEEEEIEEPVPAGDVERGSRSSLRGRYGEVMPVYRRDSHRDVQAGSHDYPGEGIYLLKFDNSYSLLRNKTLYFHIYYTS.

A disordered region spans residues 1–78 (MSDLQAAEGP…MVSPVSKDAT (78 aa)). Residues 159–323 (PPCIWTFAKV…NKTLYFHIYY (165 aa)) enclose the GOLD domain. Lys169 carries the N6-acetyllysine modification. Residues 232 to 267 (TVQVSDSSDDEDEEEEEEEEIEEPVPAGDVERGSRS) are disordered. The span at 238 to 254 (SSDDEDEEEEEEEEIEE) shows a compositional bias: acidic residues.

This Homo sapiens (Human) protein is Protein TMED8 (TMED8).